The primary structure comprises 876 residues: Beta-glucosidase 1 (876 aa).

Positions 1 to 17 are cleaved as a signal peptide; that stretch reads MLMIVQLLVFALGLAVA. N-linked (GlcNAc...) asparagine glycosylation is found at Asn22, Asn75, Asn224, and Asn267. Asp295 is an active-site residue. Residues Asn332, Asn339, Asn372, Asn389, Asn426, Asn544, Asn585, Asn739, Asn780, and Asn790 are each glycosylated (N-linked (GlcNAc...) asparagine).

This sequence belongs to the glycosyl hydrolase 3 family.

It catalyses the reaction Hydrolysis of terminal, non-reducing beta-D-glucosyl residues with release of beta-D-glucose.. It participates in glycan metabolism; cellulose degradation. The polypeptide is Beta-glucosidase 1 (BGL1) (Saccharomycopsis fibuligera (Yeast)).